We begin with the raw amino-acid sequence, 488 residues long: Protein nucleotidyltransferase YdiU (488 aa).

Residues G91, G93, R94, K114, D126, G127, R177, and R184 each contribute to the ATP site. The active-site Proton acceptor is D253. Residues N254 and D263 each contribute to the Mg(2+) site. D263 serves as a coordination point for ATP.

This sequence belongs to the SELO family. The cofactor is Mg(2+). Mn(2+) is required as a cofactor.

The enzyme catalyses L-seryl-[protein] + ATP = 3-O-(5'-adenylyl)-L-seryl-[protein] + diphosphate. It catalyses the reaction L-threonyl-[protein] + ATP = 3-O-(5'-adenylyl)-L-threonyl-[protein] + diphosphate. It carries out the reaction L-tyrosyl-[protein] + ATP = O-(5'-adenylyl)-L-tyrosyl-[protein] + diphosphate. The catalysed reaction is L-histidyl-[protein] + UTP = N(tele)-(5'-uridylyl)-L-histidyl-[protein] + diphosphate. The enzyme catalyses L-seryl-[protein] + UTP = O-(5'-uridylyl)-L-seryl-[protein] + diphosphate. It catalyses the reaction L-tyrosyl-[protein] + UTP = O-(5'-uridylyl)-L-tyrosyl-[protein] + diphosphate. In terms of biological role, nucleotidyltransferase involved in the post-translational modification of proteins. It can catalyze the addition of adenosine monophosphate (AMP) or uridine monophosphate (UMP) to a protein, resulting in modifications known as AMPylation and UMPylation. The protein is Protein nucleotidyltransferase YdiU of Bacillus cereus (strain G9842).